Reading from the N-terminus, the 337-residue chain is Inositol 2-dehydrogenase (337 aa).

This sequence belongs to the Gfo/Idh/MocA family. Homotetramer.

It carries out the reaction myo-inositol + NAD(+) = scyllo-inosose + NADH + H(+). Involved in the oxidation of myo-inositol (MI) to 2-keto-myo-inositol (2KMI or 2-inosose). In Burkholderia ambifaria (strain MC40-6), this protein is Inositol 2-dehydrogenase.